The sequence spans 567 residues: Galectin-3-binding protein A (567 aa).

The signal sequence occupies residues 1–16 (MIMYIIWALLFIPVSA). The region spanning 34-133 (VRLVGGLPSS…HQEDAGVVCD (100 aa)) is the SRCR domain. 3 disulfide bridges follow: cysteine 58-cysteine 122, cysteine 71-cysteine 132, and cysteine 102-cysteine 112. 4 N-linked (GlcNAc...) asparagine glycosylation sites follow: asparagine 137, asparagine 197, asparagine 200, and asparagine 204. The region spanning 272-374 (PVSMYEYGLR…IPVDKLYDIQ (103 aa)) is the BACK domain. Residues asparagine 412, asparagine 432, and asparagine 543 are each glycosylated (N-linked (GlcNAc...) asparagine).

Its subcellular location is the secreted. The protein localises to the extracellular space. The protein resides in the extracellular matrix. Promotes integrin-mediated cell adhesion. This Danio rerio (Zebrafish) protein is Galectin-3-binding protein A (lgals3bpa).